Here is a 286-residue protein sequence, read N- to C-terminus: Shikimate dehydrogenase (NADP(+)) (286 aa).

Shikimate is bound by residues 25–27 (SLS) and Thr-72. Lys-76 functions as the Proton acceptor in the catalytic mechanism. Glu-88 is a binding site for NADP(+). Asn-97 and Asp-113 together coordinate shikimate. Residues 138–142 (GSGGA), 162–167 (NRTIER), and Ile-232 contribute to the NADP(+) site. Residue Tyr-234 participates in shikimate binding. Gly-255 lines the NADP(+) pocket.

It belongs to the shikimate dehydrogenase family. Homodimer.

The catalysed reaction is shikimate + NADP(+) = 3-dehydroshikimate + NADPH + H(+). It functions in the pathway metabolic intermediate biosynthesis; chorismate biosynthesis; chorismate from D-erythrose 4-phosphate and phosphoenolpyruvate: step 4/7. Its function is as follows. Involved in the biosynthesis of the chorismate, which leads to the biosynthesis of aromatic amino acids. Catalyzes the reversible NADPH linked reduction of 3-dehydroshikimate (DHSA) to yield shikimate (SA). In Magnetococcus marinus (strain ATCC BAA-1437 / JCM 17883 / MC-1), this protein is Shikimate dehydrogenase (NADP(+)).